Reading from the N-terminus, the 117-residue chain is Huntingtin-interacting protein M (117 aa).

Disordered stretches follow at residues 1 to 30 and 71 to 117; these read MSEK…VPRS and EASN…RKND. Over residues 72 to 81 the composition is skewed to polar residues; sequence ASNNGSMRNT. A compositionally biased stretch (basic and acidic residues) spans 82–117; the sequence is SQDREREVDNNREPHSAESDVTRFLFDEMPKSRKND.

In terms of assembly, may interact with the N-terminus of HD.

The chain is Huntingtin-interacting protein M from Homo sapiens (Human).